A 268-amino-acid chain; its full sequence is Gene 65 protein (268 aa).

This is Gene 65 protein (65) from Mycobacterium (Mycobacteriophage L5).